A 317-amino-acid chain; its full sequence is Beta-ketoacyl-[acyl-carrier-protein] synthase III (317 aa).

Residues cysteine 112 and histidine 244 contribute to the active site. The segment at 245–249 (QANLR) is ACP-binding. Asparagine 274 is a catalytic residue.

It belongs to the thiolase-like superfamily. FabH family. As to quaternary structure, homodimer.

The protein resides in the cytoplasm. It carries out the reaction malonyl-[ACP] + acetyl-CoA + H(+) = 3-oxobutanoyl-[ACP] + CO2 + CoA. It participates in lipid metabolism; fatty acid biosynthesis. Functionally, catalyzes the condensation reaction of fatty acid synthesis by the addition to an acyl acceptor of two carbons from malonyl-ACP. Catalyzes the first condensation reaction which initiates fatty acid synthesis and may therefore play a role in governing the total rate of fatty acid production. Possesses both acetoacetyl-ACP synthase and acetyl transacylase activities. Its substrate specificity determines the biosynthesis of branched-chain and/or straight-chain of fatty acids. This chain is Beta-ketoacyl-[acyl-carrier-protein] synthase III, found in Citrobacter koseri (strain ATCC BAA-895 / CDC 4225-83 / SGSC4696).